A 266-amino-acid chain; its full sequence is 4-hydroxy-tetrahydrodipicolinate reductase (266 aa).

Residues 8-13 (GAAGRM) and Glu-33 contribute to the NAD(+) site. Arg-34 provides a ligand contact to NADP(+). Residues 97-99 (GST) and 121-124 (APNM) each bind NAD(+). The Proton donor/acceptor role is filled by His-154. His-155 is a binding site for (S)-2,3,4,5-tetrahydrodipicolinate. Lys-158 acts as the Proton donor in catalysis. 164-165 (GT) serves as a coordination point for (S)-2,3,4,5-tetrahydrodipicolinate.

It belongs to the DapB family.

The protein localises to the cytoplasm. It carries out the reaction (S)-2,3,4,5-tetrahydrodipicolinate + NAD(+) + H2O = (2S,4S)-4-hydroxy-2,3,4,5-tetrahydrodipicolinate + NADH + H(+). The catalysed reaction is (S)-2,3,4,5-tetrahydrodipicolinate + NADP(+) + H2O = (2S,4S)-4-hydroxy-2,3,4,5-tetrahydrodipicolinate + NADPH + H(+). The protein operates within amino-acid biosynthesis; L-lysine biosynthesis via DAP pathway; (S)-tetrahydrodipicolinate from L-aspartate: step 4/4. Its function is as follows. Catalyzes the conversion of 4-hydroxy-tetrahydrodipicolinate (HTPA) to tetrahydrodipicolinate. This Trichlorobacter lovleyi (strain ATCC BAA-1151 / DSM 17278 / SZ) (Geobacter lovleyi) protein is 4-hydroxy-tetrahydrodipicolinate reductase.